Consider the following 435-residue polypeptide: MRVLILGSGVIGTTSAWYLSKAGCEVVVVDRQSGAGLETSYANGGQLSFGYTSPWAAPGVPLKAVRWLFERHAPLSIRPTTDWNQYVWLARMLRHCSAERYAVNKSRMLRLSEYSREALEALSAETGITFEGRHLGTIQLFRTQQQLDVVVRDIELLTQYGIPYEVLSPSQISKFEPGLADGSVRFPGALRLPHDQTGDCCLFTQRLAALAAKRGVEFRYGCTVQRLEVDGPRVTGAWINGALERADCCVVALGSYSPLLLAPLGLRLPVYPLKGFSLTLPMIDASRAPVSTVLDESYKVAVTRFDERIRVAGMAEVSGYDVSLNPRRRATLEMVVQDVYPGCGDLGRGEFWTGLRPATPDGTPVIGATPYQGLFLNTGHGTLGWTMSSGSGRYLADLICCRPCEISSEGLDMFRYLVSTIPCPQECAPCVPPTP.

Position 3–17 (3–17 (VLILGSGVIGTTSAW)) interacts with FAD.

This sequence belongs to the DadA oxidoreductase family. Requires FAD as cofactor.

The catalysed reaction is a D-alpha-amino acid + A + H2O = a 2-oxocarboxylate + AH2 + NH4(+). It functions in the pathway amino-acid degradation; D-alanine degradation; NH(3) and pyruvate from D-alanine: step 1/1. Oxidative deamination of D-amino acids. The protein is D-amino acid dehydrogenase of Xylella fastidiosa (strain 9a5c).